Here is a 257-residue protein sequence, read N- to C-terminus: uncharacterized protein (257 aa).

A helical membrane pass occupies residues 6–26; the sequence is IFWLNLAAIIIISIVVSGGMF.

It belongs to the staphylococcal tandem lipoprotein family.

The protein localises to the cell membrane. This is an uncharacterized protein from Staphylococcus aureus (strain MSSA476).